Consider the following 77-residue polypeptide: MAKVCQVTGKKPMVGNNVSHANNKTKRRFLPNLQNRRFWVESENRWISLRLTNAGLRVIDKNGIDAVLSDLRARGEI.

It belongs to the bacterial ribosomal protein bL28 family.

This Polynucleobacter asymbioticus (strain DSM 18221 / CIP 109841 / QLW-P1DMWA-1) (Polynucleobacter necessarius subsp. asymbioticus) protein is Large ribosomal subunit protein bL28.